Consider the following 317-residue polypeptide: Ribose-phosphate pyrophosphokinase (317 aa).

ATP is bound by residues 43 to 45 (DGE) and 102 to 103 (RQ). Mg(2+)-binding residues include His-136 and Asp-175. The active site involves Lys-198. D-ribose 5-phosphate contacts are provided by residues Arg-200, Asp-224, and 228–232 (DTAGT).

Belongs to the ribose-phosphate pyrophosphokinase family. Class I subfamily. In terms of assembly, homohexamer. It depends on Mg(2+) as a cofactor.

The protein localises to the cytoplasm. The enzyme catalyses D-ribose 5-phosphate + ATP = 5-phospho-alpha-D-ribose 1-diphosphate + AMP + H(+). Its pathway is metabolic intermediate biosynthesis; 5-phospho-alpha-D-ribose 1-diphosphate biosynthesis; 5-phospho-alpha-D-ribose 1-diphosphate from D-ribose 5-phosphate (route I): step 1/1. Functionally, involved in the biosynthesis of the central metabolite phospho-alpha-D-ribosyl-1-pyrophosphate (PRPP) via the transfer of pyrophosphoryl group from ATP to 1-hydroxyl of ribose-5-phosphate (Rib-5-P). The protein is Ribose-phosphate pyrophosphokinase of Bacillus anthracis.